Here is a 336-residue protein sequence, read N- to C-terminus: D-erythrose-4-phosphate dehydrogenase (336 aa).

An NAD(+)-binding site is contributed by 11–12 (RI). Substrate-binding positions include 153–155 (SCT), R199, 212–213 (TR), and R235. C154 functions as the Nucleophile in the catalytic mechanism. N317 provides a ligand contact to NAD(+).

It belongs to the glyceraldehyde-3-phosphate dehydrogenase family. Epd subfamily. In terms of assembly, homotetramer.

Its subcellular location is the cytoplasm. The enzyme catalyses D-erythrose 4-phosphate + NAD(+) + H2O = 4-phospho-D-erythronate + NADH + 2 H(+). The protein operates within cofactor biosynthesis; pyridoxine 5'-phosphate biosynthesis; pyridoxine 5'-phosphate from D-erythrose 4-phosphate: step 1/5. Functionally, catalyzes the NAD-dependent conversion of D-erythrose 4-phosphate to 4-phosphoerythronate. The chain is D-erythrose-4-phosphate dehydrogenase from Alteromonas mediterranea (strain DSM 17117 / CIP 110805 / LMG 28347 / Deep ecotype).